Here is a 188-residue protein sequence, read N- to C-terminus: Mitochondrial import inner membrane translocase subunit Tim23B (188 aa).

The next 2 membrane-spanning stretches (helical) occupy residues 73 to 93 (FELA…FGAM) and 125 to 145 (ALWA…GVII).

This sequence belongs to the Tim17/Tim22/Tim23 family.

The protein localises to the mitochondrion inner membrane. Functionally, may participate in the translocation of transit peptide-containing proteins across the mitochondrial inner membrane. the PAM complex. This chain is Mitochondrial import inner membrane translocase subunit Tim23B, found in Homo sapiens (Human).